The sequence spans 154 residues: Pro-corazonin (154 aa).

Residues 1–19 (MLRLLLLPLFLFTLSMCMG) form the signal peptide. Glutamine 20 bears the Pyrrolidone carboxylic acid mark. At asparagine 30 the chain carries Asparagine amide. The propeptide occupies 70–154 (LERCLSQLQR…SAEPNVFGKH (85 aa)).

The protein belongs to the corazonin family. As to expression, expression is restricted to 24 neurons in the larval CNS (8 in the brain and 16 in the ventral nerve cord) and 12-16 neurons in the pars lateralis of the adult brain.

It localises to the secreted. Functionally, cardioactive peptide. Corazonin is probably involved in the physiological regulation of the heart beat. Clock (Clk) and cycle (cyc) proteins negatively regulate Crz transcription in a cell-specific manner. This chain is Pro-corazonin (Crz), found in Drosophila simulans (Fruit fly).